Reading from the N-terminus, the 460-residue chain is Histidinol dehydrogenase (460 aa).

Positions 269, 291, and 294 each coordinate substrate. Residues Gln-291 and His-294 each coordinate Zn(2+). Residues Glu-358 and His-359 each act as proton acceptor in the active site. The substrate site is built by His-359, Asp-392, Glu-446, and His-451. Asp-392 serves as a coordination point for Zn(2+). His-451 is a Zn(2+) binding site.

The protein belongs to the histidinol dehydrogenase family. The cofactor is Zn(2+).

It catalyses the reaction L-histidinol + 2 NAD(+) + H2O = L-histidine + 2 NADH + 3 H(+). It functions in the pathway amino-acid biosynthesis; L-histidine biosynthesis; L-histidine from 5-phospho-alpha-D-ribose 1-diphosphate: step 9/9. Its function is as follows. Catalyzes the sequential NAD-dependent oxidations of L-histidinol to L-histidinaldehyde and then to L-histidine. In Rhodopirellula baltica (strain DSM 10527 / NCIMB 13988 / SH1), this protein is Histidinol dehydrogenase.